An 811-amino-acid polypeptide reads, in one-letter code: DEAD-box ATP-dependent RNA helicase 48 (811 aa).

Disordered stretches follow at residues 1-32 (MGGG…ERGL) and 93-138 (DDGP…EPRL). The segment covering 15 to 29 (WQHKRMHEKLARHKE) has biased composition (basic residues). Composition is skewed to basic and acidic residues over residues 95-104 (GPIHRADRPR) and 117-138 (GDRR…EPRL). Residues 286-333 (RNCDMKKERRALKSYEEENNDLAGSFRELREEIKNREVLGAERRRYES) adopt a coiled-coil conformation. The Q motif motif lies at 342–370 (KRFEECGISPLTVKALTDAGYVQTTVVQE). Residues 373–556 (LPMCLEGKDV…QLVLKRDHVF (184 aa)) enclose the Helicase ATP-binding domain. 386-393 (AKTGTGKS) contacts ATP. The DEAD box motif lies at 504-507 (DEAD). Residues 570 to 740 (KVEQLYLVMP…EMKRKVDGSI (171 aa)) form the Helicase C-terminal domain.

The protein belongs to the DEAD box helicase family.

The catalysed reaction is ATP + H2O = ADP + phosphate + H(+). In Oryza sativa subsp. japonica (Rice), this protein is DEAD-box ATP-dependent RNA helicase 48.